The primary structure comprises 880 residues: Alanine--tRNA ligase (880 aa).

Residues His-567, His-571, Cys-669, and His-673 each contribute to the Zn(2+) site.

This sequence belongs to the class-II aminoacyl-tRNA synthetase family. Requires Zn(2+) as cofactor.

It localises to the cytoplasm. It carries out the reaction tRNA(Ala) + L-alanine + ATP = L-alanyl-tRNA(Ala) + AMP + diphosphate. In terms of biological role, catalyzes the attachment of alanine to tRNA(Ala) in a two-step reaction: alanine is first activated by ATP to form Ala-AMP and then transferred to the acceptor end of tRNA(Ala). Also edits incorrectly charged Ser-tRNA(Ala) and Gly-tRNA(Ala) via its editing domain. The chain is Alanine--tRNA ligase from Bacillus thuringiensis (strain Al Hakam).